Reading from the N-terminus, the 311-residue chain is tRNA dimethylallyltransferase (311 aa).

11-18 provides a ligand contact to ATP; sequence GPTASGKS. 13–18 provides a ligand contact to substrate; the sequence is TASGKS. Interaction with substrate tRNA stretches follow at residues 36 to 39 and 160 to 164; these read DSMQ and QRLIR.

Belongs to the IPP transferase family. In terms of assembly, monomer. The cofactor is Mg(2+).

The enzyme catalyses adenosine(37) in tRNA + dimethylallyl diphosphate = N(6)-dimethylallyladenosine(37) in tRNA + diphosphate. In terms of biological role, catalyzes the transfer of a dimethylallyl group onto the adenine at position 37 in tRNAs that read codons beginning with uridine, leading to the formation of N6-(dimethylallyl)adenosine (i(6)A). The chain is tRNA dimethylallyltransferase from Rickettsia typhi (strain ATCC VR-144 / Wilmington).